We begin with the raw amino-acid sequence, 602 residues long: Elongation factor 4 (602 aa).

In terms of domain architecture, tr-type G spans 6 to 188; it reads DRIRNFCIIA…RIVTRIPPPG (183 aa). Residues 18–23 and 135–138 each bind GTP; these read DHGKST and NKID.

It belongs to the TRAFAC class translation factor GTPase superfamily. Classic translation factor GTPase family. LepA subfamily.

It is found in the cell membrane. The catalysed reaction is GTP + H2O = GDP + phosphate + H(+). Its function is as follows. Required for accurate and efficient protein synthesis under certain stress conditions. May act as a fidelity factor of the translation reaction, by catalyzing a one-codon backward translocation of tRNAs on improperly translocated ribosomes. Back-translocation proceeds from a post-translocation (POST) complex to a pre-translocation (PRE) complex, thus giving elongation factor G a second chance to translocate the tRNAs correctly. Binds to ribosomes in a GTP-dependent manner. The sequence is that of Elongation factor 4 from Pelotomaculum thermopropionicum (strain DSM 13744 / JCM 10971 / SI).